The following is a 903-amino-acid chain: DNA-directed DNA polymerase (903 aa).

The tract at residues 103–340 (YDHTKIRVAN…VLQIDAKRQF (238 aa)) is 3'-5'exonuclease. Aspartate 114, glutamate 116, and aspartate 222 together coordinate Mg(2+). The tract at residues 248–264 (TRVKVIENMYGSREIIT) is beta hairpin. Mg(2+) is bound by residues aspartate 327, aspartate 411, and leucine 412. Residues 380–903 (IPQGRSHPVQ…KASLFDMFDF (524 aa)) form a polymerase region. Substrate-binding positions include 414–416 (SLY), arginine 482, and lysine 560. Aspartate 623 provides a ligand contact to Mg(2+). Positions 705–708 (KKRY) are binding of DNA in B-conformation. The interval 897–903 (LFDMFDF) is interaction with the polymerase clamp.

This sequence belongs to the DNA polymerase type-B family. As to quaternary structure, part of the replicase complex that includes the DNA polymerase, the polymerase clamp, the clamp loader complex, the single-stranded DNA binding protein, and the primase/helicase. Interacts with the polymerase clamp; this interaction constitutes the polymerase holoenzyme. Requires Mg(2+) as cofactor.

It catalyses the reaction DNA(n) + a 2'-deoxyribonucleoside 5'-triphosphate = DNA(n+1) + diphosphate. In terms of biological role, replicates the viral genomic DNA. This polymerase possesses two enzymatic activities: DNA synthesis (polymerase) and an exonucleolytic activity that degrades single-stranded DNA in the 3'- to 5'-direction for proofreading purpose. In Escherichia coli (Bacteriophage RB69), this protein is DNA-directed DNA polymerase (43).